Consider the following 415-residue polypeptide: Extracellular signal-regulated kinase 1 (415 aa).

The Protein kinase domain maps to tyrosine 66 to leucine 369. ATP-binding positions include valine 72–valine 80 and lysine 95. Aspartate 190 (proton acceptor) is an active-site residue. Residue threonine 226 is modified to Phosphothreonine. The TXY signature appears at threonine 226 to tyrosine 228. At tyrosine 228 the chain carries Phosphotyrosine.

The protein belongs to the protein kinase superfamily. CMGC Ser/Thr protein kinase family. MAP kinase subfamily. Mg(2+) is required as a cofactor. In terms of processing, dually phosphorylated on Thr-226 and Tyr-228, which activates the enzyme.

It catalyses the reaction L-seryl-[protein] + ATP = O-phospho-L-seryl-[protein] + ADP + H(+). It carries out the reaction L-threonyl-[protein] + ATP = O-phospho-L-threonyl-[protein] + ADP + H(+). Activated by tyrosine and threonine phosphorylation. The polypeptide is Extracellular signal-regulated kinase 1 (CEK1) (Candida albicans (strain WO-1) (Yeast)).